Consider the following 321-residue polypeptide: Lipoyl synthase (321 aa).

[4Fe-4S] cluster contacts are provided by C68, C73, C79, C94, C98, C101, and S308. In terms of domain architecture, Radical SAM core spans 80–297 (FNHGTATFMI…KAEALAMGFT (218 aa)).

This sequence belongs to the radical SAM superfamily. Lipoyl synthase family. Requires [4Fe-4S] cluster as cofactor.

The protein resides in the cytoplasm. It catalyses the reaction [[Fe-S] cluster scaffold protein carrying a second [4Fe-4S](2+) cluster] + N(6)-octanoyl-L-lysyl-[protein] + 2 oxidized [2Fe-2S]-[ferredoxin] + 2 S-adenosyl-L-methionine + 4 H(+) = [[Fe-S] cluster scaffold protein] + N(6)-[(R)-dihydrolipoyl]-L-lysyl-[protein] + 4 Fe(3+) + 2 hydrogen sulfide + 2 5'-deoxyadenosine + 2 L-methionine + 2 reduced [2Fe-2S]-[ferredoxin]. Its pathway is protein modification; protein lipoylation via endogenous pathway; protein N(6)-(lipoyl)lysine from octanoyl-[acyl-carrier-protein]: step 2/2. Catalyzes the radical-mediated insertion of two sulfur atoms into the C-6 and C-8 positions of the octanoyl moiety bound to the lipoyl domains of lipoate-dependent enzymes, thereby converting the octanoylated domains into lipoylated derivatives. In Escherichia coli O9:H4 (strain HS), this protein is Lipoyl synthase.